The following is a 377-amino-acid chain: Queuine tRNA-ribosyltransferase (377 aa).

The active-site Proton acceptor is Asp89. Residues 89–93, Asp143, Gln188, and Gly215 each bind substrate; that span reads DSGGF. The segment at 246–252 is RNA binding; it reads GVGKPED. The active-site Nucleophile is the Asp265. Positions 270–274 are RNA binding; important for wobble base 34 recognition; it reads TRNAR. Zn(2+)-binding residues include Cys303, Cys305, Cys308, and His334.

The protein belongs to the queuine tRNA-ribosyltransferase family. In terms of assembly, homodimer. Within each dimer, one monomer is responsible for RNA recognition and catalysis, while the other monomer binds to the replacement base PreQ1. Zn(2+) is required as a cofactor.

It catalyses the reaction 7-aminomethyl-7-carbaguanine + guanosine(34) in tRNA = 7-aminomethyl-7-carbaguanosine(34) in tRNA + guanine. The protein operates within tRNA modification; tRNA-queuosine biosynthesis. Catalyzes the base-exchange of a guanine (G) residue with the queuine precursor 7-aminomethyl-7-deazaguanine (PreQ1) at position 34 (anticodon wobble position) in tRNAs with GU(N) anticodons (tRNA-Asp, -Asn, -His and -Tyr). Catalysis occurs through a double-displacement mechanism. The nucleophile active site attacks the C1' of nucleotide 34 to detach the guanine base from the RNA, forming a covalent enzyme-RNA intermediate. The proton acceptor active site deprotonates the incoming PreQ1, allowing a nucleophilic attack on the C1' of the ribose to form the product. After dissociation, two additional enzymatic reactions on the tRNA convert PreQ1 to queuine (Q), resulting in the hypermodified nucleoside queuosine (7-(((4,5-cis-dihydroxy-2-cyclopenten-1-yl)amino)methyl)-7-deazaguanosine). This is Queuine tRNA-ribosyltransferase from Acinetobacter baumannii (strain ACICU).